We begin with the raw amino-acid sequence, 274 residues long: MDAALQSLSRFVADCAVLAPKVVNGRFGKMDVLHHRPTTSKLFLRKTIAAHSFSADEINVHDLMSDHPSFVDMYFCYSSPTAWAIVMDYVPCPDLFETLQTQGALDNALVVNIVRQLCDALNDLHNATGYIHNDVKLENVLYFGARDRVYLCDYGLCKREHSPVHDGTLEYFSPEKIRRHNYARSFDWYAVGVLAYKLLTGGRHPFERSADEVLDLASMRRRQQYNDPAALKNVRNLMARDFVFCLTRFNFECRSTDYKQIAKHSFLASRHDYI.

One can recognise a Protein kinase domain in the interval 16–273 (AVLAPKVVNG…HSFLASRHDY (258 aa)). Residues 22 to 30 (VVNGRFGKM) and K46 each bind ATP. The active-site Proton acceptor is D134.

This sequence belongs to the protein kinase superfamily. Ser/Thr protein kinase family.

It carries out the reaction L-seryl-[protein] + ATP = O-phospho-L-seryl-[protein] + ADP + H(+). It catalyses the reaction L-threonyl-[protein] + ATP = O-phospho-L-threonyl-[protein] + ADP + H(+). This Orgyia pseudotsugata multicapsid polyhedrosis virus (OpMNPV) protein is Serine/threonine-protein kinase 1 (PK1).